Consider the following 231-residue polypeptide: Putative N-acetylmannosamine-6-phosphate 2-epimerase (231 aa).

It belongs to the NanE family.

The catalysed reaction is an N-acyl-D-glucosamine 6-phosphate = an N-acyl-D-mannosamine 6-phosphate. Its pathway is amino-sugar metabolism; N-acetylneuraminate degradation; D-fructose 6-phosphate from N-acetylneuraminate: step 3/5. Functionally, converts N-acetylmannosamine-6-phosphate (ManNAc-6-P) to N-acetylglucosamine-6-phosphate (GlcNAc-6-P). In Listeria monocytogenes serotype 4b (strain CLIP80459), this protein is Putative N-acetylmannosamine-6-phosphate 2-epimerase.